Reading from the N-terminus, the 394-residue chain is MLEFEQGFNHLATLKVIGVGGGGNNAVNRMIDHGMNNVEFIAINTDGQALNLSKAESKIQIGEKLTRGLGAGANPEIGKKAAEESREQIEDAIQGADMVFVTAGMGGGTGTGAAPVVAKIAKEMGALTVGVVTRPFGFEGRKRQTQAAAGVESMKAAVDTLIVIPNDRLLDIVDKSTPMMEAFKEADNVLRQGVQGISDLIAVSGEVNLDFADVKTIMSNQGSALMGIGVSSGENRAVEAAKKAISSPLLETSIVGAQGVLMNITGGESLSLFEAQEAADIVQDAADEDVNMIFGTVINPELQDEIVVTVIATGFEDKPSSQGRKATSTGFGSSVNSSSNHQSGASAKEDSFSAHTSHSQSSESVNERSHTTKDDDIPSFIRNREERRSRRTRR.

GTP-binding positions include 21 to 25 (GGGNN), 108 to 110 (GTG), Glu-139, Arg-143, and Asp-187. The tract at residues 317-394 (DKPSSQGRKA…EERRSRRTRR (78 aa)) is disordered. Composition is skewed to low complexity over residues 328–346 (STGF…SGAS) and 353–364 (SAHTSHSQSSES). Positions 365–388 (VNERSHTTKDDDIPSFIRNREERR) are enriched in basic and acidic residues.

It belongs to the FtsZ family. Homodimer. Polymerizes to form a dynamic ring structure in a strictly GTP-dependent manner. Interacts directly with several other division proteins.

It localises to the cytoplasm. Its function is as follows. Essential cell division protein that forms a contractile ring structure (Z ring) at the future cell division site. The regulation of the ring assembly controls the timing and the location of cell division. One of the functions of the FtsZ ring is to recruit other cell division proteins to the septum to produce a new cell wall between the dividing cells. Binds GTP and shows GTPase activity. This Staphylococcus epidermidis (strain ATCC 12228 / FDA PCI 1200) protein is Cell division protein FtsZ.